Reading from the N-terminus, the 556-residue chain is Putative cysteine ligase BshC (556 aa).

2 coiled-coil regions span residues I408–A442 and L468–T513.

Belongs to the BshC family.

Its function is as follows. Involved in bacillithiol (BSH) biosynthesis. May catalyze the last step of the pathway, the addition of cysteine to glucosamine malate (GlcN-Mal) to generate BSH. The polypeptide is Putative cysteine ligase BshC (Symbiobacterium thermophilum (strain DSM 24528 / JCM 14929 / IAM 14863 / T)).